Reading from the N-terminus, the 471-residue chain is V-type ATP synthase beta chain (471 aa).

Belongs to the ATPase alpha/beta chains family.

In terms of biological role, produces ATP from ADP in the presence of a proton gradient across the membrane. The V-type beta chain is a regulatory subunit. In Streptococcus pyogenes serotype M28 (strain MGAS6180), this protein is V-type ATP synthase beta chain.